A 556-amino-acid chain; its full sequence is General transcription factor IIF subunit 1 (556 aa).

Disordered regions lie at residues 82 to 128 (TMTS…PAAA) and 226 to 499 (SRLQ…PFTE). Positions 84–128 (TSAPNGTNSTGTTPNTTTTTTTTTTTTTTTTTAAGTPGAPNPAAA) are enriched in low complexity. Basic and acidic residues predominate over residues 245 to 275 (SGKKSIEELEEAEHRNRNEDPNRYKTTNEEK). 2 stretches are compositionally biased toward acidic residues: residues 291-338 (GNGE…DVDL) and 378-394 (GDDEDDDEDDEDPDQDD). 2 stretches are compositionally biased toward basic and acidic residues: residues 415–427 (VKKEDDGGKDSKS) and 450–461 (NKSDSSVDNRES). Residues 469–492 (SSPQAVQPNSPSQQQQQQQQNIDP) show a composition bias toward low complexity.

Belongs to the TFIIF alpha subunit family. As to quaternary structure, heterodimer of an alpha and a beta subunit.

Its subcellular location is the nucleus. In terms of biological role, TFIIF is a general transcription initiation factor that binds to RNA polymerase II and helps to recruit it to the initiation complex in collaboration with TFIIB. It promotes transcription elongation. The chain is General transcription factor IIF subunit 1 (gtf2f1) from Dictyostelium discoideum (Social amoeba).